Reading from the N-terminus, the 332-residue chain is Holliday junction branch migration complex subunit RuvB (332 aa).

The large ATPase domain (RuvB-L) stretch occupies residues 1-181 (MERIISELEM…FGVSHKMEYY (181 aa)). Positions 20, 21, 62, 65, 66, 67, 171, 181, and 218 each coordinate ATP. Thr-66 contacts Mg(2+). Residues 182–252 (NENEIKSIII…SAKNALDMLG (71 aa)) form a small ATPAse domain (RuvB-S) region. The head domain (RuvB-H) stretch occupies residues 255–332 (SNGLDDLDRN…QHFKKVEVKI (78 aa)). DNA is bound by residues Arg-291, Arg-310, and Arg-315.

This sequence belongs to the RuvB family. In terms of assembly, homohexamer. Forms an RuvA(8)-RuvB(12)-Holliday junction (HJ) complex. HJ DNA is sandwiched between 2 RuvA tetramers; dsDNA enters through RuvA and exits via RuvB. An RuvB hexamer assembles on each DNA strand where it exits the tetramer. Each RuvB hexamer is contacted by two RuvA subunits (via domain III) on 2 adjacent RuvB subunits; this complex drives branch migration. In the full resolvosome a probable DNA-RuvA(4)-RuvB(12)-RuvC(2) complex forms which resolves the HJ.

It is found in the cytoplasm. The enzyme catalyses ATP + H2O = ADP + phosphate + H(+). In terms of biological role, the RuvA-RuvB-RuvC complex processes Holliday junction (HJ) DNA during genetic recombination and DNA repair, while the RuvA-RuvB complex plays an important role in the rescue of blocked DNA replication forks via replication fork reversal (RFR). RuvA specifically binds to HJ cruciform DNA, conferring on it an open structure. The RuvB hexamer acts as an ATP-dependent pump, pulling dsDNA into and through the RuvAB complex. RuvB forms 2 homohexamers on either side of HJ DNA bound by 1 or 2 RuvA tetramers; 4 subunits per hexamer contact DNA at a time. Coordinated motions by a converter formed by DNA-disengaged RuvB subunits stimulates ATP hydrolysis and nucleotide exchange. Immobilization of the converter enables RuvB to convert the ATP-contained energy into a lever motion, pulling 2 nucleotides of DNA out of the RuvA tetramer per ATP hydrolyzed, thus driving DNA branch migration. The RuvB motors rotate together with the DNA substrate, which together with the progressing nucleotide cycle form the mechanistic basis for DNA recombination by continuous HJ branch migration. Branch migration allows RuvC to scan DNA until it finds its consensus sequence, where it cleaves and resolves cruciform DNA. The chain is Holliday junction branch migration complex subunit RuvB from Fusobacterium nucleatum subsp. nucleatum (strain ATCC 25586 / DSM 15643 / BCRC 10681 / CIP 101130 / JCM 8532 / KCTC 2640 / LMG 13131 / VPI 4355).